A 333-amino-acid chain; its full sequence is MSGTPDTLFALAAGATRTAAIEGISAAGADPALMAHTPSADAELLTYGHTVRAPVVPVSPSGCPTPAVITRAVRELVGFESLVIDAGLAEPTGAPTVTTGISPGADIRDETPVPDAEAAYSAAYEFGHGLHTDELVIAETIPGGTTTAMGVLAALGEPRIVSSSLPNNPVALKERVVDDALAASGLEQGDLAGEPVAAVRQMGDPVLAVVAGLAAGALDAGIDVTLAGGTQLATAGALVRHDGVTEPMTLATTSFVAGDDSAGIDALAADQDLAVTVTDPAFEARESHPAMAAYLDGEAKEGVGMGGALALAAEAGIGMDSVRNAIISVYDRV.

This sequence belongs to the UPF0284 family.

This Halobacterium salinarum (strain ATCC 700922 / JCM 11081 / NRC-1) (Halobacterium halobium) protein is UPF0284 protein VNG_1572C.